A 271-amino-acid chain; its full sequence is NH(3)-dependent NAD(+) synthetase (271 aa).

43 to 50 (GISGGQDS) is a binding site for ATP. D49 serves as a coordination point for Mg(2+). R137 contacts deamido-NAD(+). T157 contributes to the ATP binding site. Residue E162 participates in Mg(2+) binding. The deamido-NAD(+) site is built by K170 and D177. Positions 186 and 208 each coordinate ATP. 257–258 (HK) contacts deamido-NAD(+).

This sequence belongs to the NAD synthetase family. Homodimer.

The catalysed reaction is deamido-NAD(+) + NH4(+) + ATP = AMP + diphosphate + NAD(+) + H(+). The protein operates within cofactor biosynthesis; NAD(+) biosynthesis; NAD(+) from deamido-NAD(+) (ammonia route): step 1/1. In terms of biological role, catalyzes the ATP-dependent amidation of deamido-NAD to form NAD. Uses ammonia as a nitrogen source. This is NH(3)-dependent NAD(+) synthetase from Exiguobacterium sp. (strain ATCC BAA-1283 / AT1b).